The sequence spans 1278 residues: ABC transporter B family member 11 (1278 aa).

2 stretches are compositionally biased toward basic and acidic residues: residues 1 to 13 (MNGD…DSVS) and 21 to 35 (SPKE…EKSE). A disordered region spans residues 1–35 (MNGDGAREGDSVSHEPSTSKSPKEGEETKKEEKSE). 6 helical membrane passes run 55 to 75 (VLLM…LPFM), 106 to 126 (FVYL…CWMI), 182 to 202 (FIQL…KGWL), 205 to 225 (LVML…ALIV), 285 to 305 (GLGL…AIWF), and 314 to 334 (GYTG…SMSL). Positions 58 to 346 (MICGSIGAIG…TSPCVTAFAA (289 aa)) constitute an ABC transmembrane type-1 1 domain. One can recognise an ABC transporter 1 domain in the interval 381–617 (IELKDVHFSY…SEGAYSQLIR (237 aa)). ATP is bound at residue 416–423 (GESGSGKS). N-linked (GlcNAc...) asparagine glycans are attached at residues N483, N568, and N653. Residues 629 to 654 (ELSSGSSFRNSNLKKSMEGTSSVGNS) are compositionally biased toward polar residues. Positions 629–656 (ELSSGSSFRNSNLKKSMEGTSSVGNSSR) are disordered. An ABC transmembrane type-1 2 domain is found at 710–997 (LLLGTVAAAI…SSTFAPDSSK (288 aa)). Helical transmembrane passes span 711 to 731 (LLGT…GILI) and 751 to 771 (FWAI…PTQM). N806 is a glycosylation site (N-linked (GlcNAc...) asparagine). The next 4 helical transmembrane spans lie at 824-844 (ALVG…ASGL), 845-865 (IIAF…LPLI), 932-952 (GFIS…VYAT), and 971-991 (VFQV…SSTF). The region spanning 1032–1271 (IELRHLSFTY…EGGVYASLVQ (240 aa)) is the ABC transporter 2 domain. 1067–1074 (GESGSGKS) contacts ATP. N-linked (GlcNAc...) asparagine glycosylation is found at N1121 and N1222.

The protein belongs to the ABC transporter superfamily. ABCB family. Multidrug resistance exporter (TC 3.A.1.201) subfamily. In terms of tissue distribution, present in roots and flower buds.

Its subcellular location is the membrane. It carries out the reaction (indol-3-yl)acetate(in) + ATP + H2O = (indol-3-yl)acetate(out) + ADP + phosphate + H(+). Its function is as follows. Involved in the regulation of auxin transport required for pistil elongation. This is ABC transporter B family member 11 from Arabidopsis thaliana (Mouse-ear cress).